The following is an 890-amino-acid chain: MSKALLHLHFLSLFLLCCVCHSSIFTLNFHFTGIVACRPHQIQAFTKFTNEFDTRGCNNSDTFNGVWCDNSTGAVAVLQLRKCLSGTLKSNSSLFGFHQLRYVDLQNNNLTSSSLPSGFGNLKRLEGLFLSSNGFLGQVPSSFSNLTMLAQLDLSYNKLTGSFPLVRGLRKLIVLDLSYNHFSGTLNPNSSLFELHQLRYLNLAFNNFSSSLPSKFGNLHRLENLILSSNGFSGQVPSTISNLTRLTKLYLDQNKLTSSFPLVQNLTNLYELDLSYNKFFGVIPSSLLTLPFLAHLALRENNLAGSVEVSNSSTSSRLEIMYLGSNHFEGQILEPISKLINLKHLDLSFLNTSYPIDLKLFSSLKSLRSLDLSGNSISSASLSSDSYIPLTLEMLTLRHCDINEFPNILKTLKELVYIDISNNRMKGKIPEWLWSLPLLQSVTLGNNYFTGFQGSAEILVNSSVLLLYLDSNNFEGALPDLPLSIKGFGVASNSFTSEIPLSICNRSSLAAIDLSYNNFTGPIPPCLRNLELVYLRNNNLEGSIPDALCDGASLRTLDVSHNRLTGKLPRSFVNCSSLKFLSVINNRIEDTFPFWLKALPNLQVLTLRSNRFYGPISPPHQGPLGFPELRIFEISDNKFTGSLPPNYFVNWKASSRTMNQDGGLYMVYEEKLFDEGGYGYTDALDLQYKGLHMEQAKALTSYAAIDFSGNRLEGQIPESIGLLKALIAVNISNNAFTGHIPLSMANLENLESLDMSRNQLSGTIPNGLGSISFLAYINVSHNQLTGEIPQGTQITGQSKSSFEGNAGLCGLPLKESCFGTGAPPMYHQKQEDKEEEEEEEEEEEEVLNGRAVAIGYGSGLLLGLAIAQVIASYKPEWLVKIIGLNKRRKR.

An N-terminal signal peptide occupies residues 1–22 (MSKALLHLHFLSLFLLCCVCHS). Topologically, residues 23–850 (SIFTLNFHFT…EEEEEVLNGR (828 aa)) are extracellular. Asn-58, Asn-70, Asn-91, Asn-109, and Asn-145 each carry an N-linked (GlcNAc...) asparagine glycan. LRR repeat units follow at residues 97–121 (FHQLRYVDLQNNNLTSSSLPSGFGN), 123–145 (KRLEGLFLSSNGFLGQVPSSFSN), 146–171 (LTMLAQLDLSYNKLTGSFPLVRGLRK), 173–195 (IVLDLSYNHFSGTLNPNSSLFEL), 196–218 (HQLRYLNLAFNNFSSSLPSKFGN), 220–243 (HRLENLILSSNGFSGQVPSTISNL), 244–268 (TRLTKLYLDQNKLTSSFPLVQNLTN), 270–290 (YELDLSYNKFFGVIPSSLLTL), 291–316 (PFLAHLALRENNLAGSVEVSNSSTSS), 318–339 (LEIMYLGSNHFEGQILEPISKL), 340–363 (INLKHLDLSFLNTSYPIDLKLFSS), 364–389 (LKSLRSLDLSGNSISSASLSSDSYIP), 391–411 (TLEMLTLRHCDINEFPNILKT), 412–436 (LKELVYIDISNNRMKGKIPEWLWSL), 438–461 (LLQSVTLGNNYFTGFQGSAEILVN), 462–485 (SSVLLLYLDSNNFEGALPDLPLSI), 487–506 (GFGVASNSFTSEIPLSICNR), 507–527 (SSLAAIDLSYNNFTGPIPPCL), 528–551 (RNLELVYLRNNNLEGSIPDALCDG), 553–575 (SLRTLDVSHNRLTGKLPRSFVNC), 577–598 (SLKFLSVINNRIEDTFPFWLKA), 599–623 (LPNLQVLTLRSNRFYGPISPPHQGP), 626–650 (FPELRIFEISDNKFTGSLPPNYFVN), 699–724 (LTSYAAIDFSGNRLEGQIPESIGLLK), 726–747 (LIAVNISNNAFTGHIPLSMANL), 748–771 (ENLESLDMSRNQLSGTIPNGLGSI), and 773–796 (FLAYINVSHNQLTGEIPQGTQITG). Residues Asn-189, Asn-207, Asn-242, and Asn-265 are each glycosylated (N-linked (GlcNAc...) asparagine). Asn-311 carries an N-linked (GlcNAc...) asparagine glycan. Asn-351 carries N-linked (GlcNAc...) asparagine glycosylation. Asn-461 is a glycosylation site (N-linked (GlcNAc...) asparagine). N-linked (GlcNAc...) asparagine glycans are attached at residues Asn-505 and Asn-518. Asn-574 carries N-linked (GlcNAc...) asparagine glycosylation. Asn-730 is a glycosylation site (N-linked (GlcNAc...) asparagine). Asn-778 is a glycosylation site (N-linked (GlcNAc...) asparagine). Residues 851–871 (AVAIGYGSGLLLGLAIAQVIA) traverse the membrane as a helical segment. Residues 872-890 (SYKPEWLVKIIGLNKRRKR) are Cytoplasmic-facing.

It belongs to the RLP family. As to quaternary structure, directly interacts with a 20-mer fragment (nlp20) from NLPs through its extracellular LRR domain. Component of a trimeric complex composed of RLP23, SOBIR1 and BAK1. BAK1 is recruited into a pre-formed RLP23-SOBIR1 complex in a ligand-dependent manner. Interacts with SOBIR1.

The protein localises to the cell membrane. Its function is as follows. Involved in the perception of necrosis and ethylene-inducing peptide 1-like proteins (NLPs), that act as extracellular signals mediating immune activation. Component of the RLP23-SOBIR1-BAK1 complex that mediates NLP-triggered immunity. This chain is Receptor like protein 23, found in Arabidopsis thaliana (Mouse-ear cress).